The chain runs to 106 residues: Cyclin-dependent protein kinase inhibitor SMR15 (106 aa).

Its function is as follows. Probable cyclin-dependent protein kinase (CDK) inhibitor that functions as a repressor of mitosis in the endoreduplication cell cycle. The chain is Cyclin-dependent protein kinase inhibitor SMR15 from Arabidopsis thaliana (Mouse-ear cress).